The following is a 1316-amino-acid chain: DNA-directed RNA polymerase subunit beta' (1316 aa).

The Zn(2+) site is built by Cys-60, Cys-62, Cys-75, and Cys-78. Mg(2+)-binding residues include Asp-535, Asp-537, and Asp-539. Residues Cys-891, Cys-968, Cys-975, and Cys-978 each coordinate Zn(2+).

The protein belongs to the RNA polymerase beta' chain family. The RNAP catalytic core consists of 2 alpha, 1 beta, 1 beta' and 1 omega subunit. When a sigma factor is associated with the core the holoenzyme is formed, which can initiate transcription. Mg(2+) serves as cofactor. The cofactor is Zn(2+).

It catalyses the reaction RNA(n) + a ribonucleoside 5'-triphosphate = RNA(n+1) + diphosphate. In terms of biological role, DNA-dependent RNA polymerase catalyzes the transcription of DNA into RNA using the four ribonucleoside triphosphates as substrates. The protein is DNA-directed RNA polymerase subunit beta' of Mycobacterium ulcerans (strain Agy99).